The primary structure comprises 199 residues: Prolactin-2 (199 aa).

Intrachain disulfides connect Cys4-Cys11, Cys58-Cys174, and Cys191-Cys199.

Belongs to the somatotropin/prolactin family.

It is found in the secreted. This is Prolactin-2 from Crocodylus novaeguineae (Crocodile).